The chain runs to 283 residues: Bifunctional protein FolD (283 aa).

Residues 165–167 (GRS) and Ser-190 each bind NADP(+).

The protein belongs to the tetrahydrofolate dehydrogenase/cyclohydrolase family. Homodimer.

The catalysed reaction is (6R)-5,10-methylene-5,6,7,8-tetrahydrofolate + NADP(+) = (6R)-5,10-methenyltetrahydrofolate + NADPH. The enzyme catalyses (6R)-5,10-methenyltetrahydrofolate + H2O = (6R)-10-formyltetrahydrofolate + H(+). Its pathway is one-carbon metabolism; tetrahydrofolate interconversion. Functionally, catalyzes the oxidation of 5,10-methylenetetrahydrofolate to 5,10-methenyltetrahydrofolate and then the hydrolysis of 5,10-methenyltetrahydrofolate to 10-formyltetrahydrofolate. The polypeptide is Bifunctional protein FolD (Paracidovorax citrulli (strain AAC00-1) (Acidovorax citrulli)).